We begin with the raw amino-acid sequence, 142 residues long: Large ribosomal subunit protein uL11 (142 aa).

It belongs to the universal ribosomal protein uL11 family. Part of the ribosomal stalk of the 50S ribosomal subunit. Interacts with L10 and the large rRNA to form the base of the stalk. L10 forms an elongated spine to which L12 dimers bind in a sequential fashion forming a multimeric L10(L12)X complex. One or more lysine residues are methylated.

Its function is as follows. Forms part of the ribosomal stalk which helps the ribosome interact with GTP-bound translation factors. The polypeptide is Large ribosomal subunit protein uL11 (Rhodopseudomonas palustris (strain BisB18)).